The following is a 170-amino-acid chain: Small ribosomal subunit protein uS5 (170 aa).

Residues 12-75 (LSELLVSVRR…NAAKKSMIRV (64 aa)) enclose the S5 DRBM domain.

The protein belongs to the universal ribosomal protein uS5 family. Part of the 30S ribosomal subunit. Contacts proteins S4 and S8.

Functionally, with S4 and S12 plays an important role in translational accuracy. In terms of biological role, located at the back of the 30S subunit body where it stabilizes the conformation of the head with respect to the body. The polypeptide is Small ribosomal subunit protein uS5 (Wolbachia pipientis wMel).